Here is a 251-residue protein sequence, read N- to C-terminus: MSDYVYDLMKKHHSVRQFKDKALSDETVQKLVEAGQSASTSSYLQTYSIIGVDDPEIKKQLKEVSGQPYVVDNGYLFVFVLDYYRHNLINENVDFDMQTSFESAEGLLVGAIDVALVSENVALAAEDMGYGIVYLGSLRNDVARVKEILDLPEYAFPLFGMAVGEPADDENGAPKPRLPFEHVFHKNVYNSNAKEQREAIQKYDEEISEYYKERTNGKRQETWSQQVAGFLSGKTRLDMLEELNKSGLMKK.

The protein belongs to the flavin oxidoreductase frp family. FMN serves as cofactor.

Functionally, reduces FMN, organic nitro compounds and disulfide DTNB. Involved in maintenance of the cellular redox state and the disulfide stress response. The chain is NADPH-dependent oxidoreductase (nfrA) from Staphylococcus haemolyticus (strain JCSC1435).